The primary structure comprises 166 residues: MSSAIETKKVVVEEIASKLKESKSTIIVDYRGLNVSEVTELRKQLREANVEFKVYKNTMTRRAVEQAELNGLNDFLTGPNAIAFSTEDVVAPAKVLNDFAKNHEALEIKAGVIEGKVSTVEEVKALAELPSREGLLSMLLSVLQAPVRNLALAAKAVAEQKEEQGA.

As to quaternary structure, part of the ribosomal stalk of the 50S ribosomal subunit. The N-terminus interacts with L11 and 23S rRNA to form the base of the stalk. The C-terminus forms an elongated spine to which L12 dimers bind in a sequential fashion forming a pentameric L10(L12)2(L12)2 complex.

In terms of biological role, forms part of the ribosomal stalk, playing a central role in the interaction of the ribosome with GTP-bound translation factors (such as IF-2, EF-Tu, EF-G and RF3). The chain is Large ribosomal subunit protein uL10 (rplJ) from Bacillus subtilis (strain 168).